A 746-amino-acid polypeptide reads, in one-letter code: NAD(P)H-quinone oxidoreductase subunit 5, chloroplastic (746 aa).

Transmembrane regions (helical) follow at residues 9–29 (WIIP…LLLV), 39–59 (IWAF…TNLS), 89–109 (IDSL…MVLI), 125–145 (FAYM…PNLI), 147–167 (IYIF…FWFT), 185–205 (GDFG…SFEF), 222–242 (NVLN…GAVA), 261–281 (TPIS…FLVA), 283–303 (LLPL…IGVI), 330–350 (LGYI…FHSI), 357–377 (ALLF…LGYS), 399–419 (ATFL…CFWS), 428–448 (WLYS…TAFY), 545–565 (TMLF…SVGI), 608–628 (IYSV…YGSV), and 726–746 (LFFS…YLYF).

This sequence belongs to the complex I subunit 5 family. In terms of assembly, NDH is composed of at least 16 different subunits, 5 of which are encoded in the nucleus.

Its subcellular location is the plastid. The protein localises to the chloroplast thylakoid membrane. It catalyses the reaction a plastoquinone + NADH + (n+1) H(+)(in) = a plastoquinol + NAD(+) + n H(+)(out). The catalysed reaction is a plastoquinone + NADPH + (n+1) H(+)(in) = a plastoquinol + NADP(+) + n H(+)(out). Its function is as follows. NDH shuttles electrons from NAD(P)H:plastoquinone, via FMN and iron-sulfur (Fe-S) centers, to quinones in the photosynthetic chain and possibly in a chloroplast respiratory chain. The immediate electron acceptor for the enzyme in this species is believed to be plastoquinone. Couples the redox reaction to proton translocation, and thus conserves the redox energy in a proton gradient. The chain is NAD(P)H-quinone oxidoreductase subunit 5, chloroplastic (ndhF) from Amborella trichopoda.